A 226-amino-acid polypeptide reads, in one-letter code: Ribosomal RNA small subunit methyltransferase G (226 aa).

Residues Gly-95, Leu-100, 146-147, and Arg-159 each bind S-adenosyl-L-methionine; that span reads VE.

The protein belongs to the methyltransferase superfamily. RNA methyltransferase RsmG family.

Its subcellular location is the cytoplasm. It catalyses the reaction guanosine(527) in 16S rRNA + S-adenosyl-L-methionine = N(7)-methylguanosine(527) in 16S rRNA + S-adenosyl-L-homocysteine. Specifically methylates the N7 position of guanine in position 527 of 16S rRNA. This chain is Ribosomal RNA small subunit methyltransferase G, found in Acidovorax sp. (strain JS42).